The sequence spans 596 residues: tRNA(Met) cytidine acetyltransferase TmcA (596 aa).

Residues Gln138, 160–169, and Arg285 contribute to the ATP site; that span reads GRGKSTLAGK. Positions 328 to 481 constitute an N-acetyltransferase domain; that stretch reads SDLRRLFDAQ…SGYHSAMMLY (154 aa). Acetyl-CoA is bound by residues 406–408 and 413–419; these read IAV and QKQGIGK.

Belongs to the RNA cytidine acetyltransferase family. TmcA subfamily.

It is found in the cytoplasm. It catalyses the reaction cytidine(34) in elongator tRNA(Met) + acetyl-CoA + ATP + H2O = N(4)-acetylcytidine(34) in elongator tRNA(Met) + ADP + phosphate + CoA + H(+). In terms of biological role, catalyzes the formation of N(4)-acetylcytidine (ac(4)C) at the wobble position of tRNA(Met), by using acetyl-CoA as an acetyl donor and ATP (or GTP). The chain is tRNA(Met) cytidine acetyltransferase TmcA from Actinobacillus pleuropneumoniae serotype 5b (strain L20).